We begin with the raw amino-acid sequence, 551 residues long: Interleukin-2 receptor subunit beta (551 aa).

The first 26 residues, 1-26, serve as a signal peptide directing secretion; the sequence is MAAPALSWRLPLLILLLPLATPWASA. The Extracellular portion of the chain corresponds to 27–240; sequence TVNGTSQFTC…TKPASLGKDT (214 aa). N-linked (GlcNAc...) asparagine glycosylation is found at Asn-29, Asn-43, and Asn-71. Cysteines 36 and 46 form a disulfide. The cysteines at positions 74 and 86 are disulfide-linked. In terms of domain architecture, Fibronectin type-III spans 134 to 234; it reads APISLQVVHV…QPLAFRTKPA (101 aa). Residue Asn-149 is glycosylated (N-linked (GlcNAc...) asparagine). A WSXWS motif motif is present at residues 220-224; sequence WSPWS. A helical membrane pass occupies residues 241–265; that stretch reads IPWLGHLLVGLSGAFGFIILVYLLI. Topologically, residues 266–551 are cytoplasmic; sequence NCRNTGPWLK…LQGQDPTHLV (286 aa). The short motif at 278–286 is the Box 1 motif element; that stretch reads LKCHTPDPS. Disordered regions lie at residues 393 to 412 and 433 to 476; these read DEGV…QPLS and SLLG…GPPT.

This sequence belongs to the type I cytokine receptor family. Type 4 subfamily. As to quaternary structure, non-covalent dimer of an alpha and a beta subunit. IL2R exists in 3 different forms: a high affinity dimer, an intermediate affinity monomer (beta subunit), and a low affinity monomer (alpha subunit). The high and intermediate affinity forms also associate with a gamma subunit. Interacts with SHB upon interleukin stimulation.

It is found in the cell membrane. The protein resides in the cell surface. In terms of biological role, receptor for interleukin-2. This beta subunit is involved in receptor mediated endocytosis and transduces the mitogenic signals of IL2. Probably in association with IL15RA, involved in the stimulation of neutrophil phagocytosis by IL15. This is Interleukin-2 receptor subunit beta (IL2RB) from Pan troglodytes (Chimpanzee).